The sequence spans 430 residues: Putative membrane fusion protein SilB (430 aa).

A signal peptide spans 1–28 (MASLKIKYAAIIISSLIAGGLISVTAWQ). A disordered region spans residues 407-430 (RHPEKTENSMPAMSEQPVNMHSGH). The segment covering 414-430 (NSMPAMSEQPVNMHSGH) has biased composition (polar residues).

This sequence belongs to the membrane fusion protein (MFP) (TC 8.A.1) family.

In terms of biological role, component of the sil cation efflux system that confers resistance to silver. May be part of a three-component cation/proton antiporter. The chain is Putative membrane fusion protein SilB (silB) from Salmonella typhimurium.